A 230-amino-acid polypeptide reads, in one-letter code: 5'-methylthioadenosine/S-adenosylhomocysteine nucleosidase (230 aa).

Glutamate 12 acts as the Proton acceptor in catalysis. Substrate-binding positions include glycine 78, isoleucine 152, and 173–174 (ME). The active-site Proton donor is aspartate 197.

This sequence belongs to the PNP/UDP phosphorylase family. MtnN subfamily.

The enzyme catalyses S-adenosyl-L-homocysteine + H2O = S-(5-deoxy-D-ribos-5-yl)-L-homocysteine + adenine. It catalyses the reaction S-methyl-5'-thioadenosine + H2O = 5-(methylsulfanyl)-D-ribose + adenine. The catalysed reaction is 5'-deoxyadenosine + H2O = 5-deoxy-D-ribose + adenine. It functions in the pathway amino-acid biosynthesis; L-methionine biosynthesis via salvage pathway; S-methyl-5-thio-alpha-D-ribose 1-phosphate from S-methyl-5'-thioadenosine (hydrolase route): step 1/2. Its function is as follows. Catalyzes the irreversible cleavage of the glycosidic bond in both 5'-methylthioadenosine (MTA) and S-adenosylhomocysteine (SAH/AdoHcy) to adenine and the corresponding thioribose, 5'-methylthioribose and S-ribosylhomocysteine, respectively. Also cleaves 5'-deoxyadenosine, a toxic by-product of radical S-adenosylmethionine (SAM) enzymes, into 5-deoxyribose and adenine. In Haemophilus influenzae (strain 86-028NP), this protein is 5'-methylthioadenosine/S-adenosylhomocysteine nucleosidase.